Here is a 761-residue protein sequence, read N- to C-terminus: 5-methyltetrahydropteroyltriglutamate--homocysteine methyltransferase (761 aa).

Residues 16-19 (RELK) and K116 contribute to the 5-methyltetrahydropteroyltri-L-glutamate site. L-homocysteine is bound by residues 435–437 (IGS) and E488. L-methionine is bound by residues 435–437 (IGS) and E488. Residues 519–520 (RC) and W565 each bind 5-methyltetrahydropteroyltri-L-glutamate. Residue D603 participates in L-homocysteine binding. D603 provides a ligand contact to L-methionine. Residue E609 participates in 5-methyltetrahydropteroyltri-L-glutamate binding. Zn(2+) is bound by residues H645, C647, and E669. H698 (proton donor) is an active-site residue. Residue C730 participates in Zn(2+) binding.

This sequence belongs to the vitamin-B12 independent methionine synthase family. It depends on Zn(2+) as a cofactor.

The catalysed reaction is 5-methyltetrahydropteroyltri-L-glutamate + L-homocysteine = tetrahydropteroyltri-L-glutamate + L-methionine. It functions in the pathway amino-acid biosynthesis; L-methionine biosynthesis via de novo pathway; L-methionine from L-homocysteine (MetE route): step 1/1. Functionally, catalyzes the transfer of a methyl group from 5-methyltetrahydrofolate to homocysteine resulting in methionine formation. This is 5-methyltetrahydropteroyltriglutamate--homocysteine methyltransferase from Hahella chejuensis (strain KCTC 2396).